Reading from the N-terminus, the 276-residue chain is Rhomboid protease GlpG (276 aa).

6 consecutive transmembrane segments (helical) span residues 94 to 114 (GPFTWAILLICIAVFILQNLL), 142 to 162 (AFMHFSLMHILFNLLWWWYLG), 169 to 189 (IGSGKLVVITVISALLSGFVQ), 192 to 212 (FSGPWFGGLSGVVYALMGYVW), 229 to 249 (LILFSLVWLIAGWFDVFGMAI), and 252 to 272 (GAHVAGLATGLAMAFVDTLHG). Catalysis depends on Ser-201, which acts as the Nucleophile. His-254 is an active-site residue.

The protein belongs to the peptidase S54 family.

The protein localises to the cell inner membrane. It carries out the reaction Cleaves type-1 transmembrane domains using a catalytic dyad composed of serine and histidine that are contributed by different transmembrane domains.. Rhomboid-type serine protease that catalyzes intramembrane proteolysis. The sequence is that of Rhomboid protease GlpG from Klebsiella pneumoniae (strain 342).